We begin with the raw amino-acid sequence, 693 residues long: TBC1 domain family member 14 (693 aa).

Ser-91 is subject to Phosphoserine. 2 disordered regions span residues 108–130 (PSCAPPAPSSTEREQSVRKSSTF) and 271–304 (NAQKDSKRIQKEYEDKAGRPSKPPSPKQNVRKNL). Basic and acidic residues predominate over residues 271-288 (NAQKDSKRIQKEYEDKAG). Residue Ser-295 is modified to Phosphoserine. The Rab-GAP TBC domain occupies 401–611 (GIPPSVRGKV…RIWDVFCRDG (211 aa)).

Interacts with ULK1. May interact with RAB11A and RAB11B, but does not exhibit any GTPase-activating activity toward these proteins. Interacts with TRAPPC8.

The protein resides in the golgi apparatus. Its subcellular location is the cis-Golgi network. It is found in the trans-Golgi network. In terms of biological role, plays a role in the regulation of starvation-induced autophagosome formation. Together with the TRAPPIII complex, regulates a constitutive trafficking step from peripheral recycling endosomes to the early Golgi, maintaining the cycling pool of ATG9 required for initiation of autophagy. The polypeptide is TBC1 domain family member 14 (TBC1D14) (Homo sapiens (Human)).